Here is a 219-residue protein sequence, read N- to C-terminus: GTP cyclohydrolase 1 (219 aa).

The tract at residues 1–37 (MDAVLKSLSVRLPDAADKRSDTGRPERVTERPTRQEA) is disordered. Over residues 14–37 (DAADKRSDTGRPERVTERPTRQEA) the composition is skewed to basic and acidic residues. The Zn(2+) site is built by Cys-108, His-111, and Cys-179.

Belongs to the GTP cyclohydrolase I family. As to quaternary structure, homomer.

The catalysed reaction is GTP + H2O = 7,8-dihydroneopterin 3'-triphosphate + formate + H(+). It participates in cofactor biosynthesis; 7,8-dihydroneopterin triphosphate biosynthesis; 7,8-dihydroneopterin triphosphate from GTP: step 1/1. The sequence is that of GTP cyclohydrolase 1 from Methylobacterium sp. (strain 4-46).